Consider the following 168-residue polypeptide: Photosystem I assembly protein Ycf3 (168 aa).

TPR repeat units follow at residues 35 to 68 (AFTYYRDGMSAQSEGNYAEALQNYYEATRPEIDP), 72 to 105 (SYILYNIGLIHTSNGEHTKALEYYFRALERNPFL), and 120 to 153 (GEQAIRQGDSEIAETWSDQAAEYWKQAIALTPGN).

It belongs to the Ycf3 family.

The protein localises to the plastid. It localises to the chloroplast thylakoid membrane. In terms of biological role, essential for the assembly of the photosystem I (PSI) complex. May act as a chaperone-like factor to guide the assembly of the PSI subunits. The polypeptide is Photosystem I assembly protein Ycf3 (Amborella trichopoda).